The following is a 574-amino-acid chain: Proline--tRNA ligase (574 aa).

It belongs to the class-II aminoacyl-tRNA synthetase family. ProS type 1 subfamily. In terms of assembly, homodimer.

Its subcellular location is the cytoplasm. It catalyses the reaction tRNA(Pro) + L-proline + ATP = L-prolyl-tRNA(Pro) + AMP + diphosphate. In terms of biological role, catalyzes the attachment of proline to tRNA(Pro) in a two-step reaction: proline is first activated by ATP to form Pro-AMP and then transferred to the acceptor end of tRNA(Pro). As ProRS can inadvertently accommodate and process non-cognate amino acids such as alanine and cysteine, to avoid such errors it has two additional distinct editing activities against alanine. One activity is designated as 'pretransfer' editing and involves the tRNA(Pro)-independent hydrolysis of activated Ala-AMP. The other activity is designated 'posttransfer' editing and involves deacylation of mischarged Ala-tRNA(Pro). The misacylated Cys-tRNA(Pro) is not edited by ProRS. This is Proline--tRNA ligase from Pseudoalteromonas translucida (strain TAC 125).